Here is a 128-residue protein sequence, read N- to C-terminus: Fluoride-specific ion channel FluC (128 aa).

4 helical membrane passes run 3-23 (LYALTAIGAGAALGAWLRWWF), 33-53 (TLPLGTLAANLTGGYLIGAAI), 69-89 (FAITGFLGGLTTFSTFSAETV), and 99-119 (WTFVIIFSHLTGSLVMTILGI). 2 residues coordinate Na(+): Gly76 and Thr79.

The protein belongs to the fluoride channel Fluc/FEX (TC 1.A.43) family.

It localises to the cell inner membrane. The enzyme catalyses fluoride(in) = fluoride(out). With respect to regulation, na(+) is not transported, but it plays an essential structural role and its presence is essential for fluoride channel function. Fluoride-specific ion channel. Important for reducing fluoride concentration in the cell, thus reducing its toxicity. This Nitrosospira multiformis (strain ATCC 25196 / NCIMB 11849 / C 71) protein is Fluoride-specific ion channel FluC.